The primary structure comprises 545 residues: MAKDIKFNIDARDELKKGVDELANAVKVTLGPKGRNVIIEKKFGAPHITKDGVTVAKEVELADAFQNTGAQLVKSVASKTGDDAGDGTTTATVLAQSIVGVGLKNVTAGANPMDLKRGIDKAVAKVVESIKSQAEMVGDNYDKIEQVAAVSANNDPTIGKLIADAMRKVSKDGVITIEEAKGTDTTIGVVEGMQFDRGYLSAYFVTDTEKMECVMEHPYILIYDKKISNLKDFLPILEPAVQSGRPLLVIAEDVDSEALTTLVVNRLRSQLKICAVKAPGFGDRRKAMLEDIAVLTGGIVISEEKGLKLEQATLEMLGTCDKVTVSKDNTTIVNGAGAKENIQERINQIKAEIKNTTSDYDKEKLQERLAKLSGGVAVLYVGAASEVEMKEKKDRVDDALCATRAAIEEGIVPGGGVAYIRASEALEGLKGDNEDETTGIEIIKRAIEEPLRQIVANAGKEGAVVVQKVREGKGDFGYNARTDVYENLHAAGVVDPAKVTRVALENAASIAGMFLTTECVIVEKKEDKPEMPMGAPGMGGMGGMM.

ATP-binding positions include 29-32 (TLGP), Lys50, 86-90 (DGTTT), Gly415, and Asp495.

The protein belongs to the chaperonin (HSP60) family. As to quaternary structure, forms a cylinder of 14 subunits composed of two heptameric rings stacked back-to-back. Interacts with the co-chaperonin GroES.

It localises to the cytoplasm. The enzyme catalyses ATP + H2O + a folded polypeptide = ADP + phosphate + an unfolded polypeptide.. Together with its co-chaperonin GroES, plays an essential role in assisting protein folding. The GroEL-GroES system forms a nano-cage that allows encapsulation of the non-native substrate proteins and provides a physical environment optimized to promote and accelerate protein folding. This is Chaperonin GroEL from Phocaeicola vulgatus (strain ATCC 8482 / DSM 1447 / JCM 5826 / CCUG 4940 / NBRC 14291 / NCTC 11154) (Bacteroides vulgatus).